The chain runs to 475 residues: MQYSAQFNRAKVLVLGDVMLDRYWFGATNRISPEAPVPVVRVQENEERAGGAANVAMNIASLNVPVRLLGLTGKDEAARALMQLLEKQSIHCDFTQLDSHPTITKLRILSRHQQLLRLDFEEDFNNITSADLLRKLESAVQNYGALILSDYGKGTLNDVQKMIQIARKVNIPVLIDPKGTDFARYRSATLLTPNMSEFEAVVGKCHSEEEIAEKGLQLIKDLDLSALLVTRSEKGMTLLRPNNAPFHLPTEAKEVFDVTGAGDTVISVLATALADGRSYEEACYLANVAAGIVVGKLGTSTVSTVELENAIHGRTTAGFGIMEESQLKAAVELAKARGEKIVMTNGCFDILHPGHVSYLENARKLGDRLIVAVNTDNSVKRLKGETRPINDLATRMAVLAGLSSVDWLVAFDEDTPQRLIAEILPDLLVKGGDYKPEEIVGSKEVWLNGGEVKVLNFENGCSTTNVIKKIQQLKE.

The ribokinase stretch occupies residues 1 to 317 (MQYSAQFNRA…ENAIHGRTTA (317 aa)). 194-197 (NMSE) contributes to the ATP binding site. D263 is an active-site residue. The segment at 343–475 (MTNGCFDILH…VIKKIQQLKE (133 aa)) is cytidylyltransferase.

This sequence in the N-terminal section; belongs to the carbohydrate kinase PfkB family. It in the C-terminal section; belongs to the cytidylyltransferase family. In terms of assembly, homodimer.

The enzyme catalyses D-glycero-beta-D-manno-heptose 7-phosphate + ATP = D-glycero-beta-D-manno-heptose 1,7-bisphosphate + ADP + H(+). The catalysed reaction is D-glycero-beta-D-manno-heptose 1-phosphate + ATP + H(+) = ADP-D-glycero-beta-D-manno-heptose + diphosphate. The protein operates within nucleotide-sugar biosynthesis; ADP-L-glycero-beta-D-manno-heptose biosynthesis; ADP-L-glycero-beta-D-manno-heptose from D-glycero-beta-D-manno-heptose 7-phosphate: step 1/4. Its pathway is nucleotide-sugar biosynthesis; ADP-L-glycero-beta-D-manno-heptose biosynthesis; ADP-L-glycero-beta-D-manno-heptose from D-glycero-beta-D-manno-heptose 7-phosphate: step 3/4. Functionally, catalyzes the phosphorylation of D-glycero-D-manno-heptose 7-phosphate at the C-1 position to selectively form D-glycero-beta-D-manno-heptose-1,7-bisphosphate. In terms of biological role, catalyzes the ADP transfer from ATP to D-glycero-beta-D-manno-heptose 1-phosphate, yielding ADP-D-glycero-beta-D-manno-heptose. The polypeptide is Bifunctional protein HldE (Histophilus somni (strain 129Pt) (Haemophilus somnus)).